The sequence spans 649 residues: 1-deoxy-D-xylulose-5-phosphate synthase (649 aa).

Thiamine diphosphate is bound by residues His74 and 115–117; that span reads GHA. Asp146 is a binding site for Mg(2+). Thiamine diphosphate-binding positions include 147-148, Asn176, Tyr292, and Glu375; that span reads GA. Asn176 contributes to the Mg(2+) binding site.

This sequence belongs to the transketolase family. DXPS subfamily. In terms of assembly, homodimer. Mg(2+) serves as cofactor. Requires thiamine diphosphate as cofactor.

It carries out the reaction D-glyceraldehyde 3-phosphate + pyruvate + H(+) = 1-deoxy-D-xylulose 5-phosphate + CO2. Its pathway is metabolic intermediate biosynthesis; 1-deoxy-D-xylulose 5-phosphate biosynthesis; 1-deoxy-D-xylulose 5-phosphate from D-glyceraldehyde 3-phosphate and pyruvate: step 1/1. Functionally, catalyzes the acyloin condensation reaction between C atoms 2 and 3 of pyruvate and glyceraldehyde 3-phosphate to yield 1-deoxy-D-xylulose-5-phosphate (DXP). The sequence is that of 1-deoxy-D-xylulose-5-phosphate synthase from Synechococcus sp. (strain JA-3-3Ab) (Cyanobacteria bacterium Yellowstone A-Prime).